Reading from the N-terminus, the 149-residue chain is Large ribosomal subunit protein bL9 (149 aa).

It belongs to the bacterial ribosomal protein bL9 family.

In terms of biological role, binds to the 23S rRNA. The protein is Large ribosomal subunit protein bL9 of Legionella pneumophila (strain Paris).